Here is an 86-residue protein sequence, read N- to C-terminus: Small ribosomal subunit protein eS21 (86 aa).

Belongs to the eukaryotic ribosomal protein eS21 family. Component of the 40S small ribosomal subunit.

The protein localises to the cytoplasm. Its subcellular location is the cytosol. It is found in the rough endoplasmic reticulum. The polypeptide is Small ribosomal subunit protein eS21 (RPS21) (Suberites domuncula (Sponge)).